The sequence spans 292 residues: Nucleotide-binding protein AZOSEA20610 (292 aa).

Position 8-15 (8-15 (GLSGSGKS)) interacts with ATP. 57–60 (DVRS) is a GTP binding site.

It belongs to the RapZ-like family.

Its function is as follows. Displays ATPase and GTPase activities. The sequence is that of Nucleotide-binding protein AZOSEA20610 from Aromatoleum aromaticum (strain DSM 19018 / LMG 30748 / EbN1) (Azoarcus sp. (strain EbN1)).